The sequence spans 335 residues: Eukaryotic translation initiation factor 3 subunit H-A (335 aa).

The region spanning 22-156 (IQVDGLVVLK…LKAYRLTPKL (135 aa)) is the MPN domain. Low complexity predominate over residues 254-272 (QQQKQQYQQRRQQENAQRQ). The tract at residues 254-282 (QQQKQQYQQRRQQENAQRQSRGEPPLPEE) is disordered.

Belongs to the eIF-3 subunit H family. As to quaternary structure, component of the eukaryotic translation initiation factor 3 (eIF-3) complex, which is composed of 13 subunits: eif3a, eif3b, eif3c, eif3d, eif3e, eif3f, eif3g, eif3h, eif3i, eif3j, eif3k, eif3l and eif3m.

It localises to the cytoplasm. In terms of biological role, component of the eukaryotic translation initiation factor 3 (eIF-3) complex, which is involved in protein synthesis of a specialized repertoire of mRNAs and, together with other initiation factors, stimulates binding of mRNA and methionyl-tRNAi to the 40S ribosome. The eIF-3 complex specifically targets and initiates translation of a subset of mRNAs involved in cell proliferation. The sequence is that of Eukaryotic translation initiation factor 3 subunit H-A (eif3ha) from Danio rerio (Zebrafish).